Here is a 367-residue protein sequence, read N- to C-terminus: tRNA uridine(34) hydroxylase (367 aa).

The region spanning 159–253 is the Rhodanese domain; the sequence is EDENSIVVDV…YAHEVSQKGL (95 aa). Cys213 serves as the catalytic Cysteine persulfide intermediate.

The protein belongs to the TrhO family.

The catalysed reaction is uridine(34) in tRNA + AH2 + O2 = 5-hydroxyuridine(34) in tRNA + A + H2O. Its function is as follows. Catalyzes oxygen-dependent 5-hydroxyuridine (ho5U) modification at position 34 in tRNAs. The sequence is that of tRNA uridine(34) hydroxylase from Leptospira interrogans serogroup Icterohaemorrhagiae serovar Lai (strain 56601).